A 325-amino-acid polypeptide reads, in one-letter code: Inactive S-adenosylmethionine decarboxylase prozyme (325 aa).

Belongs to the eukaryotic AdoMetDC family. Forms a heterodimer with S-adenosylmethionine decarboxylase AdoMetDC; heterodimerization is required to activate AdoMetDC.

Its pathway is amine and polyamine biosynthesis; S-adenosylmethioninamine biosynthesis; S-adenosylmethioninamine from S-adenosyl-L-methionine: step 1/1. In terms of biological role, probably has no catalytic activity due to the loss of several residues required for processing and catalysis. Forms a complex with S-adenosylmethionine decarboxylase AdoMetDC which is essential to activate AdoMetDC. Required for the biosynthesis of the polyamine spermidine. Required for growth and survival during the bloodstream life cycle stage. In Trypanosoma brucei brucei, this protein is Inactive S-adenosylmethionine decarboxylase prozyme.